Here is a 293-residue protein sequence, read N- to C-terminus: Short-chain dehydrogenase/reductase PhomF (293 aa).

Ile31 and Asn102 together coordinate NADP(+). The Proton donor role is filled by Ser175. Residues Tyr190, Lys194, and Ser225 each contribute to the NADP(+) site. The active-site Proton acceptor is Tyr190. Residue Lys194 is the Lowers pKa of active site Tyr of the active site.

It belongs to the short-chain dehydrogenases/reductases (SDR) family.

Its function is as follows. Short-chain dehydrogenase/reductase; part of the gene cluster that mediates the biosynthesis of the phomopsins, a group of hexapeptide mycotoxins which infects lupins and causes lupinosis disease in livestock. The role of phomF within the phomopsins biosynthesis pathway has still to be determined. The pathway starts with the processing of the precursor phomA by several endopeptidases including kexin proteases as well as the cluster-specific S41 family peptidase phomP1 and the oligopeptidase phomG to produce 10 identical copies of the hexapeptide Tyr-Val-Ile-Pro-Ile-Asp. After being excised from the precursor peptide, the core peptides are cyclized and modified post-translationally by enzymes encoded within the gene cluster. The timing and order of proteolysis of the phomA precursor and PTMs are still unknown. Two tyrosinase-like enzymes, phomQ1 and phomQ2, catalyze the chlorination and hydroxylation of Tyr, respectively. PhomYb, is proposed to be involved in the construction of the macrocyclic structure. The other 4 ustYa family proteins may be involved in PTMs that generate the unique structure of phomopsin A. PhomYa is required for the hydroxylation of C-beta of Tyr. PhomYc, phomYd, and phomYe are responsible for the biosynthesis of 2,3-dehydroisoleucine (dIle), 2,3-dehydroaspartic acid (dAsp), and 3,4-dehydroproline (dPro), respectively. While dIle formation by phomYc is indispensable for the installation of dAsp by phomYd, the order of the other PTMs have not been elucidated yet. Most of the biosynthetic enzymes likely have broad substrate specificity, and thus, there might be a metabolic grid from a precursor to phomopsin A. The enzyme(s) responsible for the biosynthesis of 3,4-dehydrovaline (dVal) have also not been identified yet. Finally, phomM acts as an S-adenosylmethionine-dependent alpha-N-methyltransferase that catalyzes two successive N-methylation reactions, converting N-desmethyl-phomopsin A to phomopsin A and phomopsin A further to an N,N-dimethylated congener called phomopsin E. This is Short-chain dehydrogenase/reductase PhomF from Diaporthe leptostromiformis (Lupinosis disease fungus).